A 331-amino-acid polypeptide reads, in one-letter code: Phenylalanine--tRNA ligase alpha subunit (331 aa).

Residue glutamate 252 coordinates Mg(2+).

Belongs to the class-II aminoacyl-tRNA synthetase family. Phe-tRNA synthetase alpha subunit type 1 subfamily. In terms of assembly, tetramer of two alpha and two beta subunits. Mg(2+) serves as cofactor.

The protein localises to the cytoplasm. The enzyme catalyses tRNA(Phe) + L-phenylalanine + ATP = L-phenylalanyl-tRNA(Phe) + AMP + diphosphate + H(+). This is Phenylalanine--tRNA ligase alpha subunit from Hahella chejuensis (strain KCTC 2396).